The chain runs to 1357 residues: Vascular endothelial growth factor receptor 3 (1357 aa).

An N-terminal signal peptide occupies residues 1–24 (MKRDFTFFCRIWIGIPFFSGLVNG). Ig-like C2-type domains follow at residues 25–121 (FSMS…YYRC), 138–244 (IFVF…VQVI), 255–343 (PEDS…RELT), 352–442 (PFIS…LNFT), 453–583 (EKEA…TTIP), 583–690 (PEGF…HRKY), and 699–785 (PRYR…ATVS). Residues 25 to 796 (FSMSPPTLDN…IGSDDKTNVE (772 aa)) lie on the Extracellular side of the membrane. N-linked (GlcNAc...) asparagine glycans are attached at residues asparagine 44, asparagine 48, asparagine 114, asparagine 216, and asparagine 271. Cystine bridges form between cysteine 51-cysteine 121 and cysteine 173-cysteine 225. An intrachain disulfide couples cysteine 272 to cysteine 331. 3 N-linked (GlcNAc...) asparagine glycosylation sites follow: asparagine 360, asparagine 400, and asparagine 440. 3 disulfide bridges follow: cysteine 473–cysteine 562, cysteine 493–cysteine 514, and cysteine 606–cysteine 674. 6 N-linked (GlcNAc...) asparagine glycosylation sites follow: asparagine 553, asparagine 610, asparagine 660, asparagine 707, asparagine 711, and asparagine 751. A disulfide bond links cysteine 720 and cysteine 772. The helical transmembrane segment at 797–817 (IVILIGTGVIAIFFWVLLLVI) threads the bilayer. Residues 818–1357 (FCNVKRVNPA…DYFSSSDQAV (540 aa)) lie on the Cytoplasmic side of the membrane. The 316-residue stretch at 866-1181 (LRLGKVLGHG…ALVEILGDLL (316 aa)) folds into the Protein kinase domain. ATP contacts are provided by residues 872 to 880 (LGHGAFGKV) and lysine 900. Residues 978–1007 (QSQVRRMIEAGQASQSEHQPSTSSTNPPRV) form a disordered region. The segment covering 989 to 1005 (QASQSEHQPSTSSTNPP) has biased composition (polar residues). The active-site Proton acceptor is aspartate 1045. Tyrosine 1071 and tyrosine 1076 each carry phosphotyrosine; by autocatalysis. Residues 1192–1212 (NVSQSSEDDGFSQASSRPPSQ) form a disordered region. Phosphotyrosine; by autocatalysis is present on residues tyrosine 1226, tyrosine 1227, tyrosine 1334, and tyrosine 1338.

It belongs to the protein kinase superfamily. Tyr protein kinase family. CSF-1/PDGF receptor subfamily. As to quaternary structure, interacts with vegfc and vegfd. Monomer in the absence of bound vegfc or vegfd. Homodimer in the presence of bound vegfc or vegfd. Autophosphorylated on tyrosine residues upon ligand binding. Autophosphorylation occurs in trans, i.e. one subunit of the dimeric receptor phosphorylates tyrosine residues on the other subunit.

The protein localises to the cell membrane. It localises to the cytoplasm. The protein resides in the nucleus. The enzyme catalyses L-tyrosyl-[protein] + ATP = O-phospho-L-tyrosyl-[protein] + ADP + H(+). Its activity is regulated as follows. Present in an inactive conformation in the absence of bound ligand. Binding of vegfc or vegfd leads to dimerization and activation by autophosphorylation on tyrosine residues. In terms of biological role, tyrosine-protein kinase that acts as a cell-surface receptor for vegf or vegfc. Combinations of multiple VEGF receptors are required for development of different blood vessel types in the embryo. Involved in angiogenesis, specifically in VEGF-induced sprouting of new blood vessels, but not required for proper vasculogenesis or hematopoiesis. The sequence is that of Vascular endothelial growth factor receptor 3 (flt4) from Danio rerio (Zebrafish).